The sequence spans 190 residues: Holliday junction branch migration complex subunit RuvA (190 aa).

A domain I region spans residues 1-64 (MIGRISGQLA…EDAQILYGFG (64 aa)). A domain II region spans residues 65 to 137 (SATERAAFRQ…LKGKLGADIG (73 aa)). Residues 137-141 (GVQVS) form a flexible linker region. The domain III stretch occupies residues 142–190 (VSSDSQSDILQALVALGYSDRDAALALKALPKDIGVSDGIKLALKALAK).

Belongs to the RuvA family. In terms of assembly, homotetramer. Forms an RuvA(8)-RuvB(12)-Holliday junction (HJ) complex. HJ DNA is sandwiched between 2 RuvA tetramers; dsDNA enters through RuvA and exits via RuvB. An RuvB hexamer assembles on each DNA strand where it exits the tetramer. Each RuvB hexamer is contacted by two RuvA subunits (via domain III) on 2 adjacent RuvB subunits; this complex drives branch migration. In the full resolvosome a probable DNA-RuvA(4)-RuvB(12)-RuvC(2) complex forms which resolves the HJ.

The protein localises to the cytoplasm. Functionally, the RuvA-RuvB-RuvC complex processes Holliday junction (HJ) DNA during genetic recombination and DNA repair, while the RuvA-RuvB complex plays an important role in the rescue of blocked DNA replication forks via replication fork reversal (RFR). RuvA specifically binds to HJ cruciform DNA, conferring on it an open structure. The RuvB hexamer acts as an ATP-dependent pump, pulling dsDNA into and through the RuvAB complex. HJ branch migration allows RuvC to scan DNA until it finds its consensus sequence, where it cleaves and resolves the cruciform DNA. The chain is Holliday junction branch migration complex subunit RuvA from Polaromonas sp. (strain JS666 / ATCC BAA-500).